We begin with the raw amino-acid sequence, 455 residues long: MWGGRFNEQVDALMAQFNNSFSFDRRMWREDIRGSIAWARQLARVGVISAEERDTLVDGLNMVYAEFADGRFEARETDEDIHTAVERRLGELVGTVAGKLHTGRSRNDQVATDVRLWTLGAIRRIDDRLRALQTALLAQAETAGAALMPGYTHLQRAQPVLLAHWLLAHFWPLQRDRERLADCAKRTATLPLGSGAIAGTPLMVDRTALAVELGMTAVSPNSIDAVSDRDFIAEFLFCAALIGTHLSRLAEDMIIYSSAEFGFVTLADAYSTGSSLMPQKKNPDSFELLRGKAGRLTGDLIAVLTMLKGLPSAYDKDLQEDKEPLFDAADTLELALPVAAGAVATARFHPDRMRAALDDAMLATDLADYLVARGVPFREAHHIVGRLVREAEQRGVALSALPLEVFLAAHPVCEPDVLQVFDFDRSVAMRRVPGATAPEAVNEQIAQARRCVEER.

The protein belongs to the lyase 1 family. Argininosuccinate lyase subfamily.

It localises to the cytoplasm. It carries out the reaction 2-(N(omega)-L-arginino)succinate = fumarate + L-arginine. The protein operates within amino-acid biosynthesis; L-arginine biosynthesis; L-arginine from L-ornithine and carbamoyl phosphate: step 3/3. This chain is Argininosuccinate lyase, found in Roseiflexus sp. (strain RS-1).